Here is a 340-residue protein sequence, read N- to C-terminus: UDP-N-acetylenolpyruvoylglucosamine reductase (340 aa).

The region spanning 14 to 185 (HVEATARWLL…VAVEFNLPLL (172 aa)) is the FAD-binding PCMH-type domain. R162 is an active-site residue. Residue S235 is the Proton donor of the active site. Residue E332 is part of the active site.

This sequence belongs to the MurB family. It depends on FAD as a cofactor.

It localises to the cytoplasm. The enzyme catalyses UDP-N-acetyl-alpha-D-muramate + NADP(+) = UDP-N-acetyl-3-O-(1-carboxyvinyl)-alpha-D-glucosamine + NADPH + H(+). It functions in the pathway cell wall biogenesis; peptidoglycan biosynthesis. Its function is as follows. Cell wall formation. In Xanthomonas oryzae pv. oryzae (strain KACC10331 / KXO85), this protein is UDP-N-acetylenolpyruvoylglucosamine reductase.